The primary structure comprises 179 residues: Large ribosomal subunit protein uL5 (179 aa).

The protein belongs to the universal ribosomal protein uL5 family. Part of the 50S ribosomal subunit; part of the 5S rRNA/L5/L18/L25 subcomplex. Contacts the 5S rRNA and the P site tRNA. Forms a bridge to the 30S subunit in the 70S ribosome.

In terms of biological role, this is one of the proteins that bind and probably mediate the attachment of the 5S RNA into the large ribosomal subunit, where it forms part of the central protuberance. In the 70S ribosome it contacts protein S13 of the 30S subunit (bridge B1b), connecting the 2 subunits; this bridge is implicated in subunit movement. Contacts the P site tRNA; the 5S rRNA and some of its associated proteins might help stabilize positioning of ribosome-bound tRNAs. The polypeptide is Large ribosomal subunit protein uL5 (Rickettsia typhi (strain ATCC VR-144 / Wilmington)).